We begin with the raw amino-acid sequence, 1587 residues long: DNA topoisomerase 2 (1587 aa).

Residues 1-15 (MSDADPFDMSDDDDN) are compositionally biased toward acidic residues. The disordered stretch occupies residues 1-47 (MSDADPFDMSDDDDNSVLSHTPPKKQKKAPTTKKGGSKPLADVENES). Basic residues predominate over residues 22–31 (PPKKQKKAPT). Residues N126, N155, 183 to 185 (SSN), and 196 to 203 (GRNGFGAK) each bind ATP. Interaction with DNA regions lie at residues 381 to 383 (KKK) and 381 to 386 (KKKNKN). ATP is bound at residue 415–417 (QTK). A disordered region spans residues 461 to 485 (MLKKTDGGRRSRMNNPKLTDANKAG). The Toprim domain maps to 492–606 (CTLILTEGDS…SLLKIPEFLI (115 aa)). Mg(2+) contacts are provided by E498, D575, and D577. In terms of domain architecture, Topo IIA-type catalytic spans 743 to 1190 (IPSVVDGLKP…SKEDIWKRDL (448 aa)). Y833 serves as the catalytic O-(5'-phospho-DNA)-tyrosine intermediate. Residues 1016 to 1025 (KLSKTMTTTN) are interaction with DNA. Residues 1204–1587 (EARRQRKVAN…PRPRRPRRRS (384 aa)) form a disordered region. The segment covering 1271–1280 (LSFLGKSSAK) has biased composition (low complexity). Basic and acidic residues predominate over residues 1308–1320 (PKSEPKADPKPKD). A compositionally biased stretch (acidic residues) spans 1321 to 1334 (EDEDIVMEDSDIEE). Basic and acidic residues predominate over residues 1348–1364 (VKPESEDGQAKIAEAPK). The span at 1365-1375 (RGRAAAKPKPK) shows a compositional bias: basic residues. Acidic residues-rich tracts occupy residues 1379 to 1391 (EDEEDELDDDDFM) and 1419 to 1430 (SDSDSDNGDDLL). Polar residues-rich tracts occupy residues 1441–1451 (GSTNGASTSDS) and 1466–1475 (GLKTTASKAS). Over residues 1512-1521 (DNEPEDDDDE) the composition is skewed to acidic residues. Over residues 1524-1542 (KPAAKGKAAAKGKSTAAAA) the composition is skewed to low complexity. Over residues 1558-1568 (PKPPPRLPCPL) the composition is skewed to pro residues. A compositionally biased stretch (basic residues) spans 1571-1587 (RRTHRSNPRPRRPRRRS).

Belongs to the type II topoisomerase family. In terms of assembly, homodimer. Requires Mg(2+) as cofactor. Mn(2+) is required as a cofactor. It depends on Ca(2+) as a cofactor.

The protein resides in the nucleus. It carries out the reaction ATP-dependent breakage, passage and rejoining of double-stranded DNA.. Its function is as follows. Control of topological states of DNA by transient breakage and subsequent rejoining of DNA strands. Topoisomerase II makes double-strand breaks. This is DNA topoisomerase 2 (TOP2) from Penicillium chrysogenum (Penicillium notatum).